Here is a 638-residue protein sequence, read N- to C-terminus: Acetolactate synthase 1, chloroplastic (638 aa).

Residues 1–19 (MATAAAASTALTGATTAAP) are compositionally biased toward low complexity. The disordered stretch occupies residues 1–23 (MATAAAASTALTGATTAAPKARR). A chloroplast-targeting transit peptide spans 1-39 (MATAAAASTALTGATTAAPKARRRAHLLATRRALAAPIR). Residue Glu112 participates in thiamine diphosphate binding. A disulfide bond links Cys132 and Cys278. Residues Arg214, 320–341 (HGTV…LGVR), and 363–382 (DIDP…ICAD) each bind FAD. The tract at residues 455–535 (QHQMWAAQYY…VKVFVLNNQH (81 aa)) is thiamine pyrophosphate binding. The Mg(2+) site is built by Asp506 and Asn533.

It belongs to the TPP enzyme family. It depends on Mg(2+) as a cofactor. Requires thiamine diphosphate as cofactor.

The protein localises to the plastid. The protein resides in the chloroplast. The enzyme catalyses 2 pyruvate + H(+) = (2S)-2-acetolactate + CO2. It participates in amino-acid biosynthesis; L-isoleucine biosynthesis; L-isoleucine from 2-oxobutanoate: step 1/4. The protein operates within amino-acid biosynthesis; L-valine biosynthesis; L-valine from pyruvate: step 1/4. The protein is Acetolactate synthase 1, chloroplastic (ALS1) of Zea mays (Maize).